A 1116-amino-acid chain; its full sequence is Anillin (1116 aa).

Basic and acidic residues-rich tracts occupy residues 1-25 (MDPF…KMAD) and 85-94 (KQPKTPELPK). 4 disordered regions span residues 1-188 (MDPF…PVGR), 205-257 (DLSH…PKDT), 304-363 (KPNE…KVAT), and 443-522 (NVWT…PRLV). The segment covering 101–119 (ASHQQLRATNQTPQVSLLS) has biased composition (polar residues). Positions 120 to 133 (SDKELTASDVKDAS) are enriched in basic and acidic residues. Residues 142-254 (LADQRRYWDN…QDTTSCSQRP (113 aa)) are interactions with myh9 and myh10. Over residues 226 to 242 (SKESTTSSASASMNSHS) the composition is skewed to low complexity. An interaction with F-actin region spans residues 255–418 (KDTTVNKAVC…LKQNDISSTA (164 aa)). 2 stretches are compositionally biased toward polar residues: residues 304 to 326 (KPNE…SSPQ) and 336 to 356 (YSYQ…VQTQ). Residues 416–443 (STASLAQQQKKEREKELAALRGRYDRRN) are a coiled coil. Residues 453–472 (QGTFPETSSNLPTSDVASCS) are compositionally biased toward polar residues. Residues 975–1099 (SVEDKGFLTM…WMQKLNQFLV (125 aa)) form the PH domain.

Interacts with and bundles F-actin. Interacts with the non-muscle myosin II heavy chains myh9 and myh10, and these interactions may be enhanced by the phosphorylation of myosin II regulatory light chain by mylk.

The protein localises to the nucleus. It is found in the cytoplasm. The protein resides in the cytoskeleton. Its subcellular location is the cell cortex. It localises to the cell projection. The protein localises to the bleb. Required for cytokinesis. Essential for the structural integrity of the cleavage furrow and for completion of cleavage furrow ingression. Plays a role in bleb assembly during metaphase and anaphase of mitosis. May play a significant role in podocyte cell migration. This chain is Anillin (anln), found in Xenopus laevis (African clawed frog).